The sequence spans 212 residues: Large ribosomal subunit protein uL1 (212 aa).

The protein belongs to the universal ribosomal protein uL1 family. Part of the 50S ribosomal subunit.

Functionally, binds directly to 23S rRNA. Probably involved in E site tRNA release. Its function is as follows. Protein L1 is also a translational repressor protein, it controls the translation of its operon by binding to its mRNA. The sequence is that of Large ribosomal subunit protein uL1 from Haloarcula marismortui (strain ATCC 43049 / DSM 3752 / JCM 8966 / VKM B-1809) (Halobacterium marismortui).